Consider the following 428-residue polypeptide: U2 small nuclear ribonucleoprotein auxiliary factor 35 kDa subunit-related protein 2-like (428 aa).

The tract at residues 1–51 is disordered; that stretch reads MASRQTAIPEKLSRKQYKAAMKKEKRKKRRQKMARLRALEAPPEEDDDVSA. Basic residues predominate over residues 23–35; the sequence is KEKRKKRRQKMAR. Positions 42 to 51 are enriched in acidic residues; it reads PPEEDDDVSA. Residue Ser-50 is modified to Phosphoserine. A C3H1-type 1 zinc finger spans residues 157-185; sequence EKYRPSCPFYNKTGACRFGNRCSRKHDFP. The RRM domain occupies 189 to 295; the sequence is PTLLVKSMFT…RQLQCEFCPV (107 aa). The segment at 297–324 adopts a C3H1-type 2 zinc-finger fold; sequence RWKVAICGLFEMQKCPKGKHCNFLHVFR. A disordered region spans residues 339–428; that stretch reads MSPPAWTGSS…PGPQSQSHRT (90 aa). At Ser-340 the chain carries Phosphoserine. Residues 351–366 are compositionally biased toward basic and acidic residues; the sequence is NSDRRERKDHHEEYYS. The segment covering 367 to 377 has biased composition (low complexity); that stretch reads KSRSYHSGSYH. Position 375 is a phosphoserine (Ser-375). The span at 389–410 shows a compositional bias: basic residues; sequence SPHRWKKSHKQTTKSHERHSSR. Residues 419–428 are compositionally biased toward polar residues; it reads PGPQSQSHRT.

Interacts with SF3B1. Interacts with ZCRB1. In terms of tissue distribution, highest expression levels are detected in the brain, and lower expression levels in other tissues like epididymis, testis, bone marrow or muscle. In testis, expressed in both Sertoli and spermatogenic cell.

Its subcellular location is the nucleus. In terms of biological role, plays a role in splicing of the U12-type introns. Implicated also in removal of U2 introns positioned adjacent to a U12 intron. The polypeptide is U2 small nuclear ribonucleoprotein auxiliary factor 35 kDa subunit-related protein 2-like (Mus musculus (Mouse)).